A 241-amino-acid chain; its full sequence is Chloride intracellular channel protein 1 (241 aa).

Ala2 carries the post-translational modification N-acetylalanine. The segment at 2-90 (AEEQPQVELF…EEFLEAVLCP (89 aa)) is required for insertion into the membrane. Lys13 is modified (N6-acetyllysine). The G-site motif lies at 24 to 27 (CPFS). Cys24 and Cys59 are joined by a disulfide. Residues 26 to 46 (FSQRLFMVLWLKGVTFNVTTV) traverse the membrane as a helical segment. In terms of domain architecture, GST C-terminal spans 93–233 (YPKLAALNPE…PDDEEIELAY (141 aa)). At Lys119 the chain carries N6-acetyllysine. At Ser121 the chain carries Phosphoserine. Residue Lys131 is modified to N6-acetyllysine. Ser156 is subject to Phosphoserine. A Phosphotyrosine modification is found at Tyr233.

The protein belongs to the chloride channel CLIC family. In terms of assembly, monomer. Homodimer (in vitro). Interacts with TRAPPC2. Dimerization requires a conformation change that leads to the exposure of a large hydrophobic surface. In vivo, this may lead to membrane insertion.

The protein resides in the nucleus. It localises to the nucleus membrane. Its subcellular location is the cytoplasm. It is found in the cell membrane. The protein localises to the endoplasmic reticulum. It catalyses the reaction L-dehydroascorbate + 2 glutathione = glutathione disulfide + L-ascorbate. The catalysed reaction is chloride(in) = chloride(out). The enzyme catalyses iodide(out) = iodide(in). It carries out the reaction thiocyanate(in) = thiocyanate(out). It catalyses the reaction nitrate(in) = nitrate(out). The catalysed reaction is bromide(in) = bromide(out). The enzyme catalyses fluoride(in) = fluoride(out). In terms of biological role, in the soluble state, catalyzes glutaredoxin-like thiol disulfide exchange reactions with reduced glutathione as electron donor. Reduces selenite and dehydroascorbate and may act as an antioxidant during oxidative stress response. Can insert into membranes and form voltage-dependent multi-ion conductive channels. Membrane insertion seems to be redox-regulated and may occur only under oxidizing conditions. Involved in regulation of the cell cycle. The polypeptide is Chloride intracellular channel protein 1 (CLIC1) (Bos taurus (Bovine)).